The chain runs to 443 residues: UDP-N-acetylglucosamine 1-carboxyvinyltransferase 1 (443 aa).

A phosphoenolpyruvate-binding site is contributed by Lys22–Asn23. UDP-N-acetyl-alpha-D-glucosamine is bound at residue Arg95. The active-site Proton donor is Cys119. Cys119 carries the 2-(S-cysteinyl)pyruvic acid O-phosphothioketal modification. Residues Arg124–Leu128, Asp308, and Val330 each bind UDP-N-acetyl-alpha-D-glucosamine.

This sequence belongs to the EPSP synthase family. MurA subfamily.

The protein resides in the cytoplasm. It carries out the reaction phosphoenolpyruvate + UDP-N-acetyl-alpha-D-glucosamine = UDP-N-acetyl-3-O-(1-carboxyvinyl)-alpha-D-glucosamine + phosphate. It participates in cell wall biogenesis; peptidoglycan biosynthesis. In terms of biological role, cell wall formation. Adds enolpyruvyl to UDP-N-acetylglucosamine. The polypeptide is UDP-N-acetylglucosamine 1-carboxyvinyltransferase 1 (Oceanobacillus iheyensis (strain DSM 14371 / CIP 107618 / JCM 11309 / KCTC 3954 / HTE831)).